The primary structure comprises 396 residues: MEFSQFKVNALMEITARPDLVFVRGQGSWLEDHAGKRYLDFVQGWAVNTLGHCAPEMKRAMAEQADKLMNPSPAFYNLPSIELAQRLTSASCFDRVFFANSGAEANEGAIKLARKWGRVNRNGAYKIITMNHGFHGRTLATMSASGKPGWDTMFAPQVEGFPKAEINDLDSVRALIDAQTVAVMLEPVQGEAGVIPATREFMQGLRKLADEHGILFIVDEVQTGMGRTGSLFAYQQFDVIPDIMTLAKGIGGGIPLAALLAREEVCVFAHGDQGGTYNGNPLCAAVGVAVFDTITAPGFMEAAQARTRQLSEGLLALSAKWSLRGERGMGLLRALVLDRDDAPAIVEAARMLAPEGLLLNAPRGNLLRFMPALNVTEADMARMLEQLDGVIAAVRK.

Residues 102–103 (GA) and Phe-134 each bind pyridoxal 5'-phosphate. Arg-137 provides a ligand contact to N(2)-acetyl-L-ornithine. 219–222 (DEVQ) lines the pyridoxal 5'-phosphate pocket. At Lys-248 the chain carries N6-(pyridoxal phosphate)lysine. Thr-276 serves as a coordination point for pyridoxal 5'-phosphate.

It belongs to the class-III pyridoxal-phosphate-dependent aminotransferase family. ArgD subfamily. As to quaternary structure, homodimer. Requires pyridoxal 5'-phosphate as cofactor.

The protein resides in the cytoplasm. It catalyses the reaction N(2)-acetyl-L-ornithine + 2-oxoglutarate = N-acetyl-L-glutamate 5-semialdehyde + L-glutamate. It functions in the pathway amino-acid biosynthesis; L-arginine biosynthesis; N(2)-acetyl-L-ornithine from L-glutamate: step 4/4. The protein is Acetylornithine aminotransferase 2 of Bordetella pertussis (strain Tohama I / ATCC BAA-589 / NCTC 13251).